The chain runs to 186 residues: Probable GTP-binding protein EngB (186 aa).

The EngB-type G domain maps to 18 to 186 (SKKEVCLIGR…LMLKIIDVIS (169 aa)). Residues 26 to 33 (GRSNVGKS), 52 to 56 (GRTVT), 69 to 72 (DLPG), 135 to 138 (NKID), and 166 to 168 (ISA) each bind GTP. Residues serine 33 and threonine 54 each coordinate Mg(2+).

The protein belongs to the TRAFAC class TrmE-Era-EngA-EngB-Septin-like GTPase superfamily. EngB GTPase family. Mg(2+) serves as cofactor.

In terms of biological role, necessary for normal cell division and for the maintenance of normal septation. The polypeptide is Probable GTP-binding protein EngB (Mycoplasmoides gallisepticum (strain R(low / passage 15 / clone 2)) (Mycoplasma gallisepticum)).